We begin with the raw amino-acid sequence, 209 residues long: Prolactin (209 aa).

The N-terminal stretch at 1-24 (MAQRFKGSNLFLTALLCLASQGHA) is a signal peptide. 2 cysteine pairs are disulfide-bonded: Cys70/Cys184 and Cys201/Cys209.

The protein belongs to the somatotropin/prolactin family.

The protein resides in the secreted. The protein is Prolactin (prl) of Anguilla japonica (Japanese eel).